A 213-amino-acid chain; its full sequence is Pyridoxine/pyridoxamine 5'-phosphate oxidase (213 aa).

Residues 8 to 11 and Lys66 contribute to the substrate site; that span reads RREY. Residues 61–66, 76–77, Arg82, Lys83, and Gln105 contribute to the FMN site; these read RIVLLK and YT. Residues Tyr123, Arg127, and Ser131 each contribute to the substrate site. Residues 140 to 141 and Trp185 each bind FMN; that span reads QS. 191–193 contacts substrate; the sequence is RLH. Arg195 contacts FMN.

The protein belongs to the pyridoxamine 5'-phosphate oxidase family. As to quaternary structure, homodimer. The cofactor is FMN.

The enzyme catalyses pyridoxamine 5'-phosphate + O2 + H2O = pyridoxal 5'-phosphate + H2O2 + NH4(+). The catalysed reaction is pyridoxine 5'-phosphate + O2 = pyridoxal 5'-phosphate + H2O2. Its pathway is cofactor metabolism; pyridoxal 5'-phosphate salvage; pyridoxal 5'-phosphate from pyridoxamine 5'-phosphate: step 1/1. The protein operates within cofactor metabolism; pyridoxal 5'-phosphate salvage; pyridoxal 5'-phosphate from pyridoxine 5'-phosphate: step 1/1. Catalyzes the oxidation of either pyridoxine 5'-phosphate (PNP) or pyridoxamine 5'-phosphate (PMP) into pyridoxal 5'-phosphate (PLP). The chain is Pyridoxine/pyridoxamine 5'-phosphate oxidase from Pseudoalteromonas atlantica (strain T6c / ATCC BAA-1087).